An 859-amino-acid chain; its full sequence is DNA mismatch repair protein MutS (859 aa).

617–624 (GPNMGGKS) contacts ATP. Positions 799-821 (ETTSLPHEQPRAKPGKPAVPQQS) are disordered.

The protein belongs to the DNA mismatch repair MutS family.

In terms of biological role, this protein is involved in the repair of mismatches in DNA. It is possible that it carries out the mismatch recognition step. This protein has a weak ATPase activity. The protein is DNA mismatch repair protein MutS of Pseudomonas syringae pv. syringae (strain B728a).